A 72-amino-acid polypeptide reads, in one-letter code: MLVITRKKGESLLIGDDIEVTVVKLDDGSVKLAIDAPKKLTILRKELYNEVQEENKKATNFNPSILKNIKSK.

The protein belongs to the CsrA/RsmA family. As to quaternary structure, homodimer; the beta-strands of each monomer intercalate to form a hydrophobic core, while the alpha-helices form wings that extend away from the core.

It is found in the cytoplasm. A translational regulator that binds mRNA to regulate translation initiation and/or mRNA stability. Usually binds in the 5'-UTR at or near the Shine-Dalgarno sequence preventing ribosome-binding, thus repressing translation. Its main target seems to be the major flagellin gene, while its function is anatagonized by FliW. The sequence is that of Translational regulator CsrA from Clostridium botulinum (strain Okra / Type B1).